Reading from the N-terminus, the 315-residue chain is Solute carrier family 25 member 32 (315 aa).

Solcar repeat units follow at residues His20–Tyr109, Leu118–Lys209, and Leu222–Phe306. The next 6 membrane-spanning stretches (helical) occupy residues Leu26–Leu43, Val89–Ile106, Tyr123–Val143, Phe186–Tyr203, Tyr227–Tyr243, and Gly281–Tyr300.

This sequence belongs to the mitochondrial carrier (TC 2.A.29) family.

It localises to the mitochondrion inner membrane. The catalysed reaction is FAD(in) = FAD(out). Functionally, facilitates flavin adenine dinucleotide (FAD) translocation across the mitochondrial inner membrane into the mitochondrial matrix where it acts as a redox cofactor to assist flavoenzyme activities in fundamental metabolic processes including fatty acid beta-oxidation, amino acid and choline metabolism as well as mitochondrial electron transportation. In particular, provides FAD to DLD dehydrogenase of the glycine cleavage system, part of mitochondrial one-carbon metabolic pathway involved in neural tube closure in early embryogenesis. The chain is Solute carrier family 25 member 32 from Macaca fascicularis (Crab-eating macaque).